The primary structure comprises 297 residues: UBX domain-containing protein 1 (297 aa).

Residue Ala-2 is modified to N-acetylalanine. In terms of domain architecture, UBA spans 2–42; the sequence is AELTALESLIEMGFPRGRAEKALALTGNQGIEAAMDWLMEH. The interval 38–212 is disordered; the sequence is WLMEHEDDPD…QEPPTKREYD (175 aa). The span at 42-52 shows a compositional bias: acidic residues; the sequence is HEDDPDVDEPL. The interval 43-297 is interaction with BRCA1; it reads EDDPDVDEPL…VLIVAKKCPS (255 aa). Basic and acidic residues-rich tracts occupy residues 86–122 and 137–177; these read LTEE…EREK and KLQE…ERAQ. Residues 86 to 172 are a coiled coil; the sequence is LTEEERQEQT…RVREKIERDK (87 aa). Ser-199 carries the post-translational modification Phosphoserine. Phosphoserine; by MAPK12 is present on Ser-200. Residues Thr-207 and Thr-229 each carry the phosphothreonine modification. In terms of domain architecture, UBX spans 209 to 291; sequence REYDQCRIQV…GLVPSAVLIV (83 aa). At Ser-270 the chain carries Phosphoserine.

As to quaternary structure, component of a complex required to couple retrotranslocation, ubiquitination and deglycosylation composed of NGLY1, SAKS1, AMFR, VCP and RAD23B. Interacts with HOMER2. Interacts directly with VCP. Interacts with BRCA1 and BARD1; interaction takes place when BRCA1 is not autoubiquitinated bur is strongly enhanced in the presence of autoubiquitinated BRCA1.

Its subcellular location is the cytoplasm. Functionally, ubiquitin-binding protein that interacts with the BRCA1-BARD1 heterodimer, and regulates its activity. Specifically binds 'Lys-6'-linked polyubiquitin chains. Interaction with autoubiquitinated BRCA1, leads to inhibit the E3 ubiquitin-protein ligase activity of the BRCA1-BARD1 heterodimer. Component of a complex required to couple deglycosylation and proteasome-mediated degradation of misfolded proteins in the endoplasmic reticulum that are retrotranslocated in the cytosol. The sequence is that of UBX domain-containing protein 1 (Ubxn1) from Rattus norvegicus (Rat).